We begin with the raw amino-acid sequence, 71 residues long: IRCFITPDITSKDCPNGHVCYTKTWCDGFCSSRGKRVDLGCAATCPTVRTGVDIQCCSTDDCDPFPTRKRP.

5 disulfide bridges follow: Cys3–Cys20, Cys14–Cys41, Cys26–Cys30, Cys45–Cys56, and Cys57–Cys62.

This sequence belongs to the three-finger toxin family. Long-chain subfamily. Type II alpha-neurotoxin sub-subfamily. As to expression, expressed by the venom gland.

It localises to the secreted. Its function is as follows. Binds with high affinity to muscular (alpha-1/CHRNA1) and neuronal (alpha-7/CHRNA7) nicotinic acetylcholine receptor (nAChR) and inhibits acetylcholine from binding to the receptor, thereby impairing neuromuscular and neuronal transmission. The chain is Long neurotoxin 2 from Naja naja (Indian cobra).